Here is a 186-residue protein sequence, read N- to C-terminus: PR-toxin biosynthesis cluster protein 7 (186 aa).

A helical transmembrane segment spans residues Leu-24–Ile-43.

It localises to the membrane. Its pathway is sesquiterpene biosynthesis. Its function is as follows. Part of the gene cluster that mediates the biosynthesis of PR-toxin, a bicyclic sesquiterpene belonging to the eremophilane class and acting as a mycotoxin. The first step of the pathway is catalyzed by the aristolochene synthase which performs the cyclization of trans,trans-farnesyl diphosphate (FPP) to the bicyclic sesquiterpene aristolochene. Following the formation of aristolochene, the non-oxygenated aristolochene is converted to the trioxygenated intermediate eremofortin B, via 7-epi-neopetasone. This conversion appears to involve three enzymes, a hydroxysterol oxidase-like enzyme, the quinone-oxidase prx3 that forms the quinone-type-structure in the bicyclic nucleus of aristolochene with the C8-oxo group and the C-3 hydroxyl group, and the P450 monooxygenase ORF6 that introduces the epoxide at the double bond between carbons 1 and 2. No monoxy or dioxy-intermediates have been reported to be released to the broth, so these three early oxidative reactions may be coupled together. Eremofortin B is further oxidized by another P450 monooxygenase, that introduces a second epoxide between carbons 7 and 11 prior to acetylation to eremofortin A by the acetyltransferase ORF8. The second epoxidation may be performed by a second P450 monooxygenase. After the acetylation step, eremofortin A is converted to eremofortin C and then to PR-toxin. First the conversion of eremofortin A to eremofortin C proceeds by oxidation of the side chain of the molecule at C-12 and is catalyzed by the short-chain oxidoreductase prx1. The cytochrome P450 monooxygenase ORF6 is probably also involved in this step. The primary alcohol formed at C-12 is finally oxidized by the short-chain alcohol dehydrogenase prx4 that forms PR-toxin. The chain is PR-toxin biosynthesis cluster protein 7 from Penicillium roqueforti (strain FM164).